The chain runs to 148 residues: Putative pre-16S rRNA nuclease (148 aa).

This sequence belongs to the YqgF nuclease family.

It localises to the cytoplasm. Could be a nuclease involved in processing of the 5'-end of pre-16S rRNA. The chain is Putative pre-16S rRNA nuclease from Chlamydia trachomatis serovar L2 (strain ATCC VR-902B / DSM 19102 / 434/Bu).